The chain runs to 389 residues: MAKKKLGTVARLSELDKSLRNRLLRVRSRLLFIVHSAIGAGVAYWIAVEVIKHGQPFFAPMSAVIILGLSGGDRIKRATELTLGCALGVGLGDLLIMQIGTGYWQIFVVVGLALLVASFVSPAPLVSNQMAIGGILIATMFPPGDGGSIDRMIDAFIGGGVGILVIALLPSSPLDAGRHQVANVLGIAASVLEDVAASLKAKDAAKLNNALEALRRSQASVNKLETAASSGKEATTVSPFLWGDRARVRSLYRILAPVDNVIRNARVLARRAVVLTEDNDTVSDEQIHVIEEIADIALRLSDLYEHHKEISEALEIPELVNRLRQLGSEVGEDIAEDRVLSAQVILAQSRSIIVDLLQICGMSRESAVAVLVPTSESPAYPPELWDDED.

4 consecutive transmembrane segments (helical) span residues 31–51 (LFIV…VEVI), 96–116 (IMQI…ALLV), 123–143 (APLV…MFPP), and 152–172 (MIDA…LPSS).

It to M.tuberculosis Rv2571c.

It is found in the cell membrane. This is an uncharacterized protein from Corynebacterium glutamicum (strain ATCC 13032 / DSM 20300 / JCM 1318 / BCRC 11384 / CCUG 27702 / LMG 3730 / NBRC 12168 / NCIMB 10025 / NRRL B-2784 / 534).